We begin with the raw amino-acid sequence, 356 residues long: UDP-N-acetylglucosamine--N-acetylmuramyl-(pentapeptide) pyrophosphoryl-undecaprenol N-acetylglucosamine transferase (356 aa).

Residues 12–14 (TGG), asparagine 124, arginine 163, serine 188, isoleucine 242, 261–266 (ALTVSE), and glutamine 287 contribute to the UDP-N-acetyl-alpha-D-glucosamine site.

The protein belongs to the glycosyltransferase 28 family. MurG subfamily.

It localises to the cell inner membrane. It carries out the reaction di-trans,octa-cis-undecaprenyl diphospho-N-acetyl-alpha-D-muramoyl-L-alanyl-D-glutamyl-meso-2,6-diaminopimeloyl-D-alanyl-D-alanine + UDP-N-acetyl-alpha-D-glucosamine = di-trans,octa-cis-undecaprenyl diphospho-[N-acetyl-alpha-D-glucosaminyl-(1-&gt;4)]-N-acetyl-alpha-D-muramoyl-L-alanyl-D-glutamyl-meso-2,6-diaminopimeloyl-D-alanyl-D-alanine + UDP + H(+). Its pathway is cell wall biogenesis; peptidoglycan biosynthesis. Functionally, cell wall formation. Catalyzes the transfer of a GlcNAc subunit on undecaprenyl-pyrophosphoryl-MurNAc-pentapeptide (lipid intermediate I) to form undecaprenyl-pyrophosphoryl-MurNAc-(pentapeptide)GlcNAc (lipid intermediate II). In Pseudomonas fluorescens (strain ATCC BAA-477 / NRRL B-23932 / Pf-5), this protein is UDP-N-acetylglucosamine--N-acetylmuramyl-(pentapeptide) pyrophosphoryl-undecaprenol N-acetylglucosamine transferase.